Reading from the N-terminus, the 461-residue chain is 26S proteasome regulatory subunit 8 (461 aa).

185-192 contacts ATP; that stretch reads GPPGTGKT.

It belongs to the AAA ATPase family.

It localises to the cytoplasm. Its subcellular location is the nucleus. In terms of biological role, the 26S proteasome is involved in the ATP-dependent degradation of ubiquitinated proteins. The regulatory (or ATPase) complex confers ATP dependency and substrate specificity to the 26S complex. This chain is 26S proteasome regulatory subunit 8 (psmc5), found in Xenopus laevis (African clawed frog).